The following is a 93-amino-acid chain: UPF0147 protein MJ1419 (93 aa).

This sequence belongs to the UPF0147 family.

The chain is UPF0147 protein MJ1419 from Methanocaldococcus jannaschii (strain ATCC 43067 / DSM 2661 / JAL-1 / JCM 10045 / NBRC 100440) (Methanococcus jannaschii).